A 239-amino-acid polypeptide reads, in one-letter code: Large ribosomal subunit protein uL2 (239 aa).

Disordered regions lie at residues 1–20 (MGHRIKTQNRGRGGPTYRAP) and 202–239 (FGGGGHQHTGRPKTVSRGTSPGRKVGSVAARRTGRRKR).

The protein belongs to the universal ribosomal protein uL2 family. In terms of assembly, part of the 50S ribosomal subunit. Forms a bridge to the 30S subunit in the 70S ribosome.

Functionally, one of the primary rRNA binding proteins. Required for association of the 30S and 50S subunits to form the 70S ribosome, for tRNA binding and peptide bond formation. It has been suggested to have peptidyltransferase activity; this is somewhat controversial. Makes several contacts with the 16S rRNA in the 70S ribosome. This is Large ribosomal subunit protein uL2 from Methanosphaerula palustris (strain ATCC BAA-1556 / DSM 19958 / E1-9c).